Reading from the N-terminus, the 25-residue chain is EAEPKPFNPVCYEPKEVGPCKAYVP.

The BPTI/Kunitz inhibitor domain occupies 1–25 (EAEPKPFNPVCYEPKEVGPCKAYVP).

In terms of biological role, serine protease inhibitor. Inhibits trypsin, elastase and plasmin. Does not inhibit kallikrein. This is Kunitz-type serine protease inhibitor RsTIS5 from Rhipicephalus sanguineus (Brown dog tick).